A 352-amino-acid chain; its full sequence is Nicotinate-nucleotide--dimethylbenzimidazole phosphoribosyltransferase (352 aa).

The active-site Proton acceptor is Glu-316.

The protein belongs to the CobT family.

The enzyme catalyses 5,6-dimethylbenzimidazole + nicotinate beta-D-ribonucleotide = alpha-ribazole 5'-phosphate + nicotinate + H(+). Its pathway is nucleoside biosynthesis; alpha-ribazole biosynthesis; alpha-ribazole from 5,6-dimethylbenzimidazole: step 1/2. Its function is as follows. Catalyzes the synthesis of alpha-ribazole-5'-phosphate from nicotinate mononucleotide (NAMN) and 5,6-dimethylbenzimidazole (DMB). In Clostridium acetobutylicum (strain ATCC 824 / DSM 792 / JCM 1419 / IAM 19013 / LMG 5710 / NBRC 13948 / NRRL B-527 / VKM B-1787 / 2291 / W), this protein is Nicotinate-nucleotide--dimethylbenzimidazole phosphoribosyltransferase.